A 96-amino-acid polypeptide reads, in one-letter code: Protein E7 (96 aa).

The tract at residues 1 to 42 is E7 terminal domain; it reads MIGNQPNVNNLDVNLEELVLPVSLLADEELSPDGDPEEEEHY. The segment at 50-86 is a zinc-finger region; it reads CKPCGAGVRFTIIATPSAVITLRQLLLQEVFLTCLRC. The short motif at 68 to 76 is the Nuclear export signal element; that stretch reads VITLRQLLL.

This sequence belongs to the papillomaviridae E7 protein family. As to quaternary structure, homodimer. Homooligomer. Interacts with host RB1; this interaction induces dissociation of RB1-E2F1 complex thereby disrupting RB1 activity. Interacts with host EP300; this interaction represses EP300 transcriptional activity. Interacts with protein E2; this interaction inhibits E7 oncogenic activity. Interacts with host TMEM173/STING; this interaction impairs the ability of TMEM173/STING to sense cytosolic DNA and promote the production of type I interferon (IFN-alpha and IFN-beta). Highly phosphorylated.

It is found in the host cytoplasm. The protein resides in the host nucleus. Plays a role in viral genome replication by driving entry of quiescent cells into the cell cycle. Stimulation of progression from G1 to S phase allows the virus to efficiently use the cellular DNA replicating machinery to achieve viral genome replication. E7 protein has both transforming and trans-activating activities. Induces the disassembly of the E2F1 transcription factor from RB1, with subsequent transcriptional activation of E2F1-regulated S-phase genes. Interferes with host histone deacetylation mediated by HDAC1 and HDAC2, leading to transcription activation. Also plays a role in the inhibition of both antiviral and antiproliferative functions of host interferon alpha. Interaction with host TMEM173/STING impairs the ability of TMEM173/STING to sense cytosolic DNA and promote the production of type I interferon (IFN-alpha and IFN-beta). This Homo sapiens (Human) protein is Protein E7.